The following is a 149-amino-acid chain: Calmodulin (149 aa).

N-acetylalanine is present on A2. EF-hand domains are found at residues 8–43, 44–79, 81–116, and 117–149; these read EQIAEFKEAFSLFDKDGDGTITTKELGTVMRSLGQN, PTEAELQDMINEVDADGNGTIDFPEFLTMMARKMKD, DSEEEIREAFRVFDKDGNGFISAAELRHVMTNLGEK, and LTDEEVDEMIREADIDGDGQVNYEEFVKMMTSK. Ca(2+) contacts are provided by D21, D23, D25, T27, E32, D57, D59, N61, T63, E68, D94, D96, N98, and E105. K116 is modified (N6,N6,N6-trimethyllysine). 5 residues coordinate Ca(2+): D130, D132, D134, Q136, and E141.

It belongs to the calmodulin family.

Functionally, calmodulin mediates the control of a large number of enzymes, ion channels and other proteins by Ca(2+). Among the enzymes to be stimulated by the calmodulin-Ca(2+) complex are a number of protein kinases and phosphatases. This chain is Calmodulin, found in Metridium senile (Brown sea anemone).